Reading from the N-terminus, the 219-residue chain is Ribonuclease T (219 aa).

Residues 20 to 194 form the Exonuclease domain; that stretch reads VVIDIETAGF…YDSLQTANLF (175 aa). Mg(2+) contacts are provided by Asp23, Glu25, His181, and Asp186. His181 functions as the Proton donor/acceptor in the catalytic mechanism.

Belongs to the RNase T family. In terms of assembly, homodimer. Requires Mg(2+) as cofactor.

Functionally, trims short 3' overhangs of a variety of RNA species, leaving a one or two nucleotide 3' overhang. Responsible for the end-turnover of tRNA: specifically removes the terminal AMP residue from uncharged tRNA (tRNA-C-C-A). Also appears to be involved in tRNA biosynthesis. In Buchnera aphidicola subsp. Schizaphis graminum (strain Sg), this protein is Ribonuclease T.